Reading from the N-terminus, the 231-residue chain is Cytidylate kinase (231 aa).

G16–T24 is a binding site for ATP. The interval P176–E205 is disordered. Basic and acidic residues predominate over residues E184–E205.

Belongs to the cytidylate kinase family. Type 1 subfamily.

Its subcellular location is the cytoplasm. It carries out the reaction CMP + ATP = CDP + ADP. The catalysed reaction is dCMP + ATP = dCDP + ADP. This chain is Cytidylate kinase, found in Pelodictyon phaeoclathratiforme (strain DSM 5477 / BU-1).